Consider the following 309-residue polypeptide: Porphobilinogen deaminase (309 aa).

Position 241 is an S-(dipyrrolylmethanemethyl)cysteine (Cys-241).

The protein belongs to the HMBS family. In terms of assembly, monomer. Requires dipyrromethane as cofactor.

It carries out the reaction 4 porphobilinogen + H2O = hydroxymethylbilane + 4 NH4(+). It participates in porphyrin-containing compound metabolism; protoporphyrin-IX biosynthesis; coproporphyrinogen-III from 5-aminolevulinate: step 2/4. In terms of biological role, tetrapolymerization of the monopyrrole PBG into the hydroxymethylbilane pre-uroporphyrinogen in several discrete steps. The sequence is that of Porphobilinogen deaminase from Bacillus cereus (strain AH820).